The primary structure comprises 556 residues: 2-succinyl-5-enolpyruvyl-6-hydroxy-3-cyclohexene-1-carboxylate synthase (556 aa).

It belongs to the TPP enzyme family. MenD subfamily. In terms of assembly, homodimer. The cofactor is Mg(2+). Mn(2+) is required as a cofactor. It depends on thiamine diphosphate as a cofactor.

The enzyme catalyses isochorismate + 2-oxoglutarate + H(+) = 5-enolpyruvoyl-6-hydroxy-2-succinyl-cyclohex-3-ene-1-carboxylate + CO2. The protein operates within quinol/quinone metabolism; 1,4-dihydroxy-2-naphthoate biosynthesis; 1,4-dihydroxy-2-naphthoate from chorismate: step 2/7. Its pathway is quinol/quinone metabolism; menaquinone biosynthesis. Catalyzes the thiamine diphosphate-dependent decarboxylation of 2-oxoglutarate and the subsequent addition of the resulting succinic semialdehyde-thiamine pyrophosphate anion to isochorismate to yield 2-succinyl-5-enolpyruvyl-6-hydroxy-3-cyclohexene-1-carboxylate (SEPHCHC). This is 2-succinyl-5-enolpyruvyl-6-hydroxy-3-cyclohexene-1-carboxylate synthase from Escherichia coli (strain K12 / MC4100 / BW2952).